The sequence spans 129 residues: Small ribosomal subunit protein uS11 (129 aa).

It belongs to the universal ribosomal protein uS11 family. Part of the 30S ribosomal subunit. Interacts with proteins S7 and S18. Binds to IF-3.

Functionally, located on the platform of the 30S subunit, it bridges several disparate RNA helices of the 16S rRNA. Forms part of the Shine-Dalgarno cleft in the 70S ribosome. This is Small ribosomal subunit protein uS11 from Desulfovibrio desulfuricans (strain ATCC 27774 / DSM 6949 / MB).